The primary structure comprises 320 residues: Malate dehydrogenase (320 aa).

Residues 10–15 and Asp-34 contribute to the NAD(+) site; that span reads GSGMIG. The substrate site is built by Arg-83 and Arg-89. NAD(+)-binding positions include Asn-96 and 119 to 121; that span reads ITN. The substrate site is built by Asn-121 and Arg-152. His-176 acts as the Proton acceptor in catalysis.

The protein belongs to the LDH/MDH superfamily. MDH type 3 family.

The catalysed reaction is (S)-malate + NAD(+) = oxaloacetate + NADH + H(+). Catalyzes the reversible oxidation of malate to oxaloacetate. The sequence is that of Malate dehydrogenase from Maricaulis maris (strain MCS10) (Caulobacter maris).